The chain runs to 258 residues: Regulatory protein RecX (258 aa).

This sequence belongs to the RecX family.

The protein localises to the cytoplasm. Modulates RecA activity. The sequence is that of Regulatory protein RecX from Streptococcus pyogenes serotype M5 (strain Manfredo).